A 301-amino-acid chain; its full sequence is Mitochondrial import receptor subunit TOM40 homolog (301 aa).

A disordered region spans residues 1–20; the sequence is MATPTESEFAAPIPQTNPGS.

Belongs to the Tom40 family. In terms of assembly, forms part of the preprotein translocase complex of the outer mitochondrial membrane (TOM complex). Interacts with mitochondrial targeting sequences.

It localises to the mitochondrion outer membrane. Channel-forming protein essential for import of protein precursors into mitochondria. Specifically required for nnt-1 accumulation in the mitochondria and may be involved in the secretion of daf-28/insulin from the mitochondria. Required for embryonic and larval development. The polypeptide is Mitochondrial import receptor subunit TOM40 homolog (Caenorhabditis briggsae).